A 100-amino-acid polypeptide reads, in one-letter code: Large ribosomal subunit protein uL23 (100 aa).

It belongs to the universal ribosomal protein uL23 family. As to quaternary structure, part of the 50S ribosomal subunit. Contacts protein L29, and trigger factor when it is bound to the ribosome.

Functionally, one of the early assembly proteins it binds 23S rRNA. One of the proteins that surrounds the polypeptide exit tunnel on the outside of the ribosome. Forms the main docking site for trigger factor binding to the ribosome. The protein is Large ribosomal subunit protein uL23 of Proteus mirabilis (strain HI4320).